We begin with the raw amino-acid sequence, 28 residues long: Toxin a (28 aa).

The LCN-type CS-alpha/beta domain occupies 3 to 28 (VPGNYPLDSYGNCYPCTILGDNQYCI).

It belongs to the long (3 C-C) scorpion toxin superfamily. As to expression, expressed by the venom gland.

The protein localises to the secreted. In terms of biological role, binds to sodium channels (Nav) and affects the channel activation process. The polypeptide is Toxin a (Androctonus crassicauda (Arabian fat-tailed scorpion)).